A 429-amino-acid chain; its full sequence is MKLQKPKGTQDILPAESAKWQYVEGFAREIFKRYNYAEVRTPIFEHYEVISRSVGDTTDIVTKEMYDFYDKGDRHITLRPEGTAPVVRSYVENKLFAPEVQKPSKFYYMGPMFRYERPQAGRLRQFHQIGVECFGSSNPATDVETIVMAAHFLKEIGIQGVKLHLNTLGNPESRAAYRQALIDYLTPLKETLSKDSQRRLEENPLRVLDSKEKEDKVAVENAPSILDFLDEESQTHFDAVRQMLENLGVDYIIDTNMVRGLDYYNHTIFEFITEIEGNDLTVCAGGRYDGLVAYFGGPETAGFGFGLGVERLLLILEKQGVALPIENALDVYIAVLGDGANVKALELVQALRQQGFKAERDYLNRKLKAQFKSADVFAAKTLITLGESEVESRQVTVKNNQTREEVQVSLETISQNFSEIFEKLGFYTQ.

Belongs to the class-II aminoacyl-tRNA synthetase family. Homodimer.

The protein localises to the cytoplasm. The enzyme catalyses tRNA(His) + L-histidine + ATP = L-histidyl-tRNA(His) + AMP + diphosphate + H(+). This is Histidine--tRNA ligase from Streptococcus pneumoniae (strain 70585).